The chain runs to 530 residues: 2,3-bisphosphoglycerate-independent phosphoglycerate mutase (530 aa).

Mn(2+) contacts are provided by Asp-15 and Ser-65. Ser-65 acts as the Phosphoserine intermediate in catalysis. Substrate-binding positions include His-126, 155–156 (RD), Arg-187, Arg-193, 257–260 (RPDR), and Lys-330. Mn(2+)-binding residues include Asp-397, His-401, Asp-438, His-439, and His-456.

It belongs to the BPG-independent phosphoglycerate mutase family. As to quaternary structure, monomer. Mn(2+) serves as cofactor.

The catalysed reaction is (2R)-2-phosphoglycerate = (2R)-3-phosphoglycerate. Its pathway is carbohydrate degradation; glycolysis; pyruvate from D-glyceraldehyde 3-phosphate: step 3/5. In terms of biological role, catalyzes the interconversion of 2-phosphoglycerate and 3-phosphoglycerate. This is 2,3-bisphosphoglycerate-independent phosphoglycerate mutase from Synechococcus sp. (strain JA-2-3B'a(2-13)) (Cyanobacteria bacterium Yellowstone B-Prime).